Here is a 147-residue protein sequence, read N- to C-terminus: Ubiquitin-conjugating enzyme E2 2 (147 aa).

Positions 1-147 constitute a UBC core domain; sequence MALKRIQKEL…AREWTQKYAM (147 aa). The active-site Glycyl thioester intermediate is cysteine 85.

It belongs to the ubiquitin-conjugating enzyme family. As to quaternary structure, interacts with the brc-1-brd-1 heterodimer following ionizing irradiation. Expressed in the nervous system.

It is found in the nucleus. Its subcellular location is the chromosome. It localises to the cytoplasm. It catalyses the reaction S-ubiquitinyl-[E1 ubiquitin-activating enzyme]-L-cysteine + [E2 ubiquitin-conjugating enzyme]-L-cysteine = [E1 ubiquitin-activating enzyme]-L-cysteine + S-ubiquitinyl-[E2 ubiquitin-conjugating enzyme]-L-cysteine.. The protein operates within protein modification; protein ubiquitination. Catalyzes the covalent attachment of ubiquitin to other proteins. Mediates the selective degradation of short-lived and abnormal proteins. Plays a role in the DNA damage response. In particular, in response to ionizing radiation, associates with the E3 ubiquitin-protein ligase brc-1-brd-1 heterodimer on chromatin to activate E3-ubiquitin ligase activity of the heterodimer, and thus its DNA damage repair mechanisms. Required, cell autonomously, for death of the linker cell, a male-specific cell which guides the elongation of the gonad; perhaps acting as part of the ubiquitin proteasome system (UPS) and modulated by heat shock transcription factor hsf-1. This chain is Ubiquitin-conjugating enzyme E2 2, found in Caenorhabditis elegans.